Here is a 1222-residue protein sequence, read N- to C-terminus: ATP-dependent helicase/nuclease subunit A (1222 aa).

One can recognise a UvrD-like helicase ATP-binding domain in the interval 39 to 495; that stretch reads QKRTAQQIEA…ILLKENFRSQ (457 aa). An ATP-binding site is contributed by 60 to 67; that stretch reads ASAGSGKT. The region spanning 524-810 is the UvrD-like helicase C-terminal domain; the sequence is QLIAGSHAQT…NLMTIHKSKG (287 aa).

It belongs to the helicase family. AddA subfamily. In terms of assembly, heterodimer of AddA and AddB/RexB. Mg(2+) is required as a cofactor.

It carries out the reaction Couples ATP hydrolysis with the unwinding of duplex DNA by translocating in the 3'-5' direction.. The catalysed reaction is ATP + H2O = ADP + phosphate + H(+). Its function is as follows. The heterodimer acts as both an ATP-dependent DNA helicase and an ATP-dependent, dual-direction single-stranded exonuclease. Recognizes the chi site generating a DNA molecule suitable for the initiation of homologous recombination. The AddA nuclease domain is required for chi fragment generation; this subunit has the helicase and 3' -&gt; 5' nuclease activities. The chain is ATP-dependent helicase/nuclease subunit A from Streptococcus pyogenes serotype M6 (strain ATCC BAA-946 / MGAS10394).